The chain runs to 222 residues: UPF0758 protein Cpar_0627 (222 aa).

The MPN domain maps to Lys-100 to Leu-222. Positions 171, 173, and 184 each coordinate Zn(2+). Residues His-171–Asp-184 carry the JAMM motif motif.

Belongs to the UPF0758 family.

The protein is UPF0758 protein Cpar_0627 of Chlorobaculum parvum (strain DSM 263 / NCIMB 8327) (Chlorobium vibrioforme subsp. thiosulfatophilum).